A 455-amino-acid chain; its full sequence is Peroxisomal membrane protein PEX3 (455 aa).

Residues 113-125 (TVLSDDFSTSQEG) show a composition bias toward polar residues. The disordered stretch occupies residues 113-135 (TVLSDDFSTSQEGAISEDTNKPP). Residues 155–171 (FLTLIYCESLLIVFLHL) form a helical membrane-spanning segment.

It belongs to the peroxin-3 family. As to quaternary structure, component of the peroxisomal docking complex, composed of at least PEX3, PEX13, PEX14 and PEX17. Component of the peroxisomal translocation complex, composed of at least PEX3, PEX2, PEX10 and PEX12. Interacts with PEX19. Interacts with the pexophagy receptor ATG30.

It is found in the peroxisome membrane. Functionally, peroxisomal membrane protein required for peroxisome biosynthesis. Shared component of both the peroxisomal docking complex and the peroxisomal translocation complex. The two types of peroxisomal matrix targeting signals, PTS1 and PTS2, are first recognized in the cytosol by their receptors PEX5 and PEX7, respectively, which then carry the cargo to the peroxisomal membrane. The peroxisomal targeting signal (PTS) receptor-cargo complexes interact with peroxisomal membrane protein (PMP) components of the docking complex. They have then additional downstream interactions with the translocation complex, leading to the transport of fully folded and oligomerized cargo into the peroxisome matrix. PEX3 acts as an anchoring site for PEX19 on the peroxisomal membrane and thus plays a crucial role in the assembly of the peroxisomal translocation complex. Is also essential for the interaction between the two complexes. Finally. PEX3 activates selective autophagy of peroxisomes (pexophagy) via interaction with the pexophagy receptor ATG30. This Komagataella phaffii (strain GS115 / ATCC 20864) (Yeast) protein is Peroxisomal membrane protein PEX3.